A 198-amino-acid chain; its full sequence is Peptidyl-tRNA hydrolase (198 aa).

Residue Tyr-16 participates in tRNA binding. The active-site Proton acceptor is the His-21. TRNA contacts are provided by Tyr-67, Asn-69, and Asn-115.

This sequence belongs to the PTH family. Monomer.

The protein resides in the cytoplasm. It carries out the reaction an N-acyl-L-alpha-aminoacyl-tRNA + H2O = an N-acyl-L-amino acid + a tRNA + H(+). Its function is as follows. Hydrolyzes ribosome-free peptidyl-tRNAs (with 1 or more amino acids incorporated), which drop off the ribosome during protein synthesis, or as a result of ribosome stalling. Catalyzes the release of premature peptidyl moieties from peptidyl-tRNA molecules trapped in stalled 50S ribosomal subunits, and thus maintains levels of free tRNAs and 50S ribosomes. In Gloeobacter violaceus (strain ATCC 29082 / PCC 7421), this protein is Peptidyl-tRNA hydrolase.